The sequence spans 165 residues: SsrA-binding protein (165 aa).

Residues methionine 1 to lysine 10 are compositionally biased toward basic residues. The segment at methionine 1–leucine 21 is disordered.

The protein belongs to the SmpB family.

The protein resides in the cytoplasm. Functionally, required for rescue of stalled ribosomes mediated by trans-translation. Binds to transfer-messenger RNA (tmRNA), required for stable association of tmRNA with ribosomes. tmRNA and SmpB together mimic tRNA shape, replacing the anticodon stem-loop with SmpB. tmRNA is encoded by the ssrA gene; the 2 termini fold to resemble tRNA(Ala) and it encodes a 'tag peptide', a short internal open reading frame. During trans-translation Ala-aminoacylated tmRNA acts like a tRNA, entering the A-site of stalled ribosomes, displacing the stalled mRNA. The ribosome then switches to translate the ORF on the tmRNA; the nascent peptide is terminated with the 'tag peptide' encoded by the tmRNA and targeted for degradation. The ribosome is freed to recommence translation, which seems to be the essential function of trans-translation. The chain is SsrA-binding protein from Prochlorococcus marinus (strain NATL1A).